We begin with the raw amino-acid sequence, 591 residues long: Metalloendopeptidase OPG085 (591 aa).

Histidine 41 is a binding site for Zn(2+). Glutamate 44 is an active-site residue. 2 residues coordinate Zn(2+): histidine 45 and glutamate 112.

Belongs to the peptidase M44 family. Requires Zn(2+) as cofactor. In terms of processing, undergoes proteolytic processing during the course of infection. May be cleaved into 46 kDa and 22 kDa products (Potential).

The protein localises to the virion. Its function is as follows. Probably involved in maturation of some viral proteins by processing them preferentially at Ala-Gly-|-Ser/Thr/Lys motifs. Does not seem to be responsible for the cleavage of major core proteins. This chain is Metalloendopeptidase OPG085 (OPG085), found in Homo sapiens (Human).